A 523-amino-acid chain; its full sequence is NADH-ubiquinone oxidoreductase chain 4 (523 aa).

14 consecutive transmembrane segments (helical) span residues 22-42 (FFIMSYIEMVLAIPLLGAIAL), 62-82 (LLTFLISLLLWIEFDSSSALF), 120-140 (ISLFFIILTTLLVPICILVSW), 149-169 (EYCIAFLVLETLMLTVFSVLD), 170-190 (LLLFYIFFESVLIPMFIIIGV), 204-224 (FFLYTLFGSVLMLLAILLIYF), 246-266 (ILWLAFFASFAVKVPMVPVHI), 276-296 (PTAGSVILAGILLKLGTYGFL), 303-323 (FPYACIYFTPLIYTMSVIAIV), 338-358 (IIAYSSVAHMNFVTIGLFSQN), 366-386 (ILLMISHGLVSPALFLCVGVL), 404-424 (TMPIFALLFVFFTMANISLPG), 444-464 (FVAFCAATGMVLGAAYALWLC), and 488-508 (FFMFAPLIAGILWIGVYPEPF).

It belongs to the complex I subunit 4 family.

It is found in the mitochondrion membrane. It carries out the reaction a ubiquinone + NADH + 5 H(+)(in) = a ubiquinol + NAD(+) + 4 H(+)(out). In terms of biological role, core subunit of the mitochondrial membrane respiratory chain NADH dehydrogenase (Complex I) that is believed to belong to the minimal assembly required for catalysis. Complex I functions in the transfer of electrons from NADH to the respiratory chain. The immediate electron acceptor for the enzyme is believed to be ubiquinone. In Prototheca wickerhamii, this protein is NADH-ubiquinone oxidoreductase chain 4 (ND4).